Consider the following 1785-residue polypeptide: Mellein synthase (1785 aa).

The tract at residues 1-36 (MATPDDPATPALSLSASNSSSPTAASSVPPPTGTSE) is disordered. The span at 8 to 27 (ATPALSLSASNSSSPTAASS) shows a compositional bias: low complexity. In terms of domain architecture, Ketosynthase family 3 (KS3) spans 39-464 (YDDVAIIGMS…GTVSHAIIEQ (426 aa)). Residues Cys-211, His-346, and His-386 each act as for beta-ketoacyl synthase activity in the active site. Residues 575-888 (VWVFSGHGSH…AVAQLWTKGV (314 aa)) form a malonyl-CoA:ACP transacylase (MAT) domain region. Ser-661 acts as the For malonyltransferase activity in catalysis. Residues 933–1047 (NNMLGQRMVV…ASWENEPSAN (115 aa)) are N-terminal hotdog fold. The region spanning 933–1206 (NNMLGQRMVV…FTEVEATPTK (274 aa)) is the PKS/mFAS DH domain. Positions 935 to 1203 (MLGQRMVVAG…SIRFTEVEAT (269 aa)) are dehydratase (DH) domain. His-965 (proton acceptor; for dehydratase activity) is an active-site residue. The segment at 1062–1206 (GTRVSETFSV…FTEVEATPTK (145 aa)) is C-terminal hotdog fold. Asp-1123 acts as the Proton donor; for dehydratase activity in catalysis. The tract at residues 1418–1608 (GTYVLTGGLG…AIAFQWTAWR (191 aa)) is ketoreductase (KR) domain. Positions 1681–1698 (QDQSAPASGNASDSSGRP) are enriched in polar residues. A disordered region spans residues 1681–1701 (QDQSAPASGNASDSSGRPTAS). The Carrier domain maps to 1706 to 1781 (PWLDVKIREC…AMVGWFQKQF (76 aa)). Ser-1741 carries the O-(pantetheine 4'-phosphoryl)serine modification.

It participates in secondary metabolite biosynthesis. Functionally, polyketide synthase that produces (R)-mellein, a secondary metabolite that inhibits the germination of wheat (Triticum aestivum) and barrel medic (Medicago truncatula) seeds. Condensates 1 acetate starter unit and 4 extender malonate units. The nascent pentaketide intermediate then undergoes an aldol cyclization and is aromatized via dehydration. The (R)-O-methylmellein isolated from P.nodorum is most likely to be derived from (R)-mellein via an additional methylation at the hydroxyl group. Interestingly, no O-methyltransferase gene is encoded in the vicinity of MLNS on the chromosome. Thus, the O-methylation is likely to be catalyzed by an endogenous O-methyltransferase encoded elsewhere in the genome of P.nodorum. This is Mellein synthase from Phaeosphaeria nodorum (strain SN15 / ATCC MYA-4574 / FGSC 10173) (Glume blotch fungus).